A 916-amino-acid chain; its full sequence is DNA mismatch repair protein MutS (916 aa).

Position 665–672 (G665–S672) interacts with ATP.

This sequence belongs to the DNA mismatch repair MutS family.

Functionally, this protein is involved in the repair of mismatches in DNA. It is possible that it carries out the mismatch recognition step. This protein has a weak ATPase activity. This chain is DNA mismatch repair protein MutS, found in Bradyrhizobium sp. (strain ORS 278).